A 429-amino-acid chain; its full sequence is Aspartate--tRNA(Asp/Asn) ligase (429 aa).

Glu166 is a binding site for L-aspartate. Positions 188-191 are aspartate; sequence QLYK. Residue Arg210 coordinates L-aspartate. ATP contacts are provided by residues 210-212, 218-220, and Glu352; these read RAE and RHL. The Mg(2+) site is built by Glu352 and Ser355. The L-aspartate site is built by Ser355 and Arg359. 400 to 403 is an ATP binding site; the sequence is GAER.

The protein belongs to the class-II aminoacyl-tRNA synthetase family. Type 2 subfamily. As to quaternary structure, homodimer. It depends on Mg(2+) as a cofactor.

The protein resides in the cytoplasm. The enzyme catalyses tRNA(Asx) + L-aspartate + ATP = L-aspartyl-tRNA(Asx) + AMP + diphosphate. Aspartyl-tRNA synthetase with relaxed tRNA specificity since it is able to aspartylate not only its cognate tRNA(Asp) but also tRNA(Asn). Reaction proceeds in two steps: L-aspartate is first activated by ATP to form Asp-AMP and then transferred to the acceptor end of tRNA(Asp/Asn). The protein is Aspartate--tRNA(Asp/Asn) ligase of Methanocorpusculum labreanum (strain ATCC 43576 / DSM 4855 / Z).